The primary structure comprises 195 residues: MKKITTINSGVIPLMRDNIDTDQIIPKQFLKNILKSGYGRNLFYDWRYKATSKEANPDFILNKPEYKQAQILVTGENFGCGSSREHAVWALKDYGFQVVIAGSYSDIFYMNSTKNGLLAIELPKKDRTILASIPAKEKIIVDLPRQQVRYEKYQFDFSINPLWKHKFINGLDDIAITMNYAKKIEAYEKEIPNFN.

Belongs to the LeuD family. LeuD type 1 subfamily. Heterodimer of LeuC and LeuD.

The catalysed reaction is (2R,3S)-3-isopropylmalate = (2S)-2-isopropylmalate. It participates in amino-acid biosynthesis; L-leucine biosynthesis; L-leucine from 3-methyl-2-oxobutanoate: step 2/4. In terms of biological role, catalyzes the isomerization between 2-isopropylmalate and 3-isopropylmalate, via the formation of 2-isopropylmaleate. This Oenococcus oeni (strain ATCC BAA-331 / PSU-1) protein is 3-isopropylmalate dehydratase small subunit.